The sequence spans 994 residues: Cation-chloride cotransporter 2 (994 aa).

Positions 1–28 (MERGGFGGAGRHDEEAPAMRPAPQQRYR) are disordered. At 1-139 (MERGGFGGAG…GHPKETETKL (139 aa)) the chain is on the cytoplasmic side. A helical transmembrane segment spans residues 140–160 (DTMMGVFVPCLQNILGIIYYI). Residues 161 to 174 (RFTWIVGMGGVWQS) are Extracellular-facing. A helical membrane pass occupies residues 175 to 195 (LVLVAFCGSCTFLTTISLSAI). Residues 196–221 (ATNGAMKGGGPYYLIGRALGPEVGVS) are Cytoplasmic-facing. A helical transmembrane segment spans residues 222 to 242 (IGLCFFLGNAVAGAMYVLGAV). Topologically, residues 243–287 (ETFLDAVPSAEFFQESVTVVTNTFVNGTAAGNATTISTPNLHDLQ) are extracellular. N-linked (GlcNAc...) asparagine glycans are attached at residues Asn-268 and Asn-274. Residues 288–308 (VYGIIVTILLCFIVFGGVKII) form a helical membrane-spanning segment. Residues 309 to 311 (NKV) lie on the Cytoplasmic side of the membrane. The helical transmembrane segment at 312-332 (APAFLIPVLFSILCIYIGVFI) threads the bilayer. The Extracellular segment spans residues 333-372 (APRPNASKWITGLSITTLKDNWSSDYQRTNNAGVPDPNGS). N-linked (GlcNAc...) asparagine glycosylation is found at Asn-337, Asn-353, and Asn-370. Residues 373-393 (IYWDFNALLGLYFPAVTGIMA) traverse the membrane as a helical segment. Topologically, residues 394–412 (GSNRSASLKDTQRSIPIGT) are cytoplasmic. A helical membrane pass occupies residues 413 to 433 (LHATISTTMMYLLSVFLFGAL). Topologically, residues 434–448 (STREGLLTDRLLCAA) are extracellular. The chain crosses the membrane as a helical span at residues 449-469 (VAWPSPAVVYAGIILSTLGAA). The Cytoplasmic segment spans residues 470–505 (LQSLTGAPRLLAAIANDDILPVLNYFKAYEGSEPHV). A helical membrane pass occupies residues 506-526 (ATLFTSFICISCVIIGNLDVI). The Extracellular segment spans residues 527-529 (TPT). A helical membrane pass occupies residues 530–552 (ITMFFLLCYAGVNLSCFLLDLLD). Residues 553 to 558 (APSWRP) are Cytoplasmic-facing. The chain crosses the membrane as a helical span at residues 559 to 579 (RWKLHHWSLSLIGALLCIVIM). The Extracellular portion of the chain corresponds to 580-585 (FMISWT). The chain crosses the membrane as a helical span at residues 586 to 606 (FTVVSLALASLIYYYVSLKGK). Residues 607 to 994 (AGDWGDGFKS…YRRDVVTLFT (388 aa)) lie on the Cytoplasmic side of the membrane.

It belongs to the SLC12A transporter family.

It localises to the membrane. In terms of biological role, probable cation/chloride cotransporter. The chain is Cation-chloride cotransporter 2 (CCC2) from Oryza sativa subsp. japonica (Rice).